We begin with the raw amino-acid sequence, 634 residues long: Chaperone protein dnaK2 (634 aa).

T197 bears the Phosphothreonine; by autocatalysis mark. Positions 601–623 (GAAAAESGADAGAAGAGDSSSGD) are enriched in low complexity. The segment at 601 to 634 (GAAAAESGADAGAAGAGDSSSGDDVIDAEFTESK) is disordered. Residues 624–634 (DVIDAEFTESK) are compositionally biased toward acidic residues.

The protein belongs to the heat shock protein 70 family.

Acts as a chaperone. The chain is Chaperone protein dnaK2 (dnaK2) from Prochlorococcus marinus (strain MIT 9313).